The following is a 370-amino-acid chain: Chaperone protein DnaJ (370 aa).

The J domain maps to 5 to 70 (DYYEVLGVSK…EKRSMYDRMG (66 aa)). The CR-type zinc finger occupies 134-212 (GVKKTITFTA…CHGSGVADRQ (79 aa)). Zn(2+) contacts are provided by C147, C150, C164, C167, C186, C189, C200, and C203. CXXCXGXG motif repeat units lie at residues 147-154 (CDVCDGKG), 164-171 (CKTCHGSG), 186-193 (CGTCRGQG), and 200-207 (CHACHGSG). A disordered region spans residues 351 to 370 (DGEDSASSPKKKSFFDRLFD).

The protein belongs to the DnaJ family. In terms of assembly, homodimer. Zn(2+) serves as cofactor.

Its subcellular location is the cytoplasm. Functionally, participates actively in the response to hyperosmotic and heat shock by preventing the aggregation of stress-denatured proteins and by disaggregating proteins, also in an autonomous, DnaK-independent fashion. Unfolded proteins bind initially to DnaJ; upon interaction with the DnaJ-bound protein, DnaK hydrolyzes its bound ATP, resulting in the formation of a stable complex. GrpE releases ADP from DnaK; ATP binding to DnaK triggers the release of the substrate protein, thus completing the reaction cycle. Several rounds of ATP-dependent interactions between DnaJ, DnaK and GrpE are required for fully efficient folding. Also involved, together with DnaK and GrpE, in the DNA replication of plasmids through activation of initiation proteins. This chain is Chaperone protein DnaJ, found in Acinetobacter baumannii (strain AB0057).